The chain runs to 324 residues: BURP domain-containing protein 5 (324 aa).

The first 30 residues, 1-30 (MCATLCTLLDEISILILMLLLIQLEIRVSA), serve as a signal peptide directing secretion. Residues 109–323 (FFLETNLQSS…QPDVVVWTRR (215 aa)) enclose the BURP domain.

Expressed in panicles.

The sequence is that of BURP domain-containing protein 5 (BURP5) from Oryza sativa subsp. japonica (Rice).